Reading from the N-terminus, the 1248-residue chain is MNGGGASGGDGYDSDGYSFAPPTPTTLSMSIPPELAGAIPLIDRFQVEGFLKAMQKQIHSAGKRGFFSKKSVGPHVREKFTLEDMLCFQKDPIPTSLLKISSDLVSRSIKLFHVILKYMGIDSPAIISLDERIELVAKLYKHTLKRSELRDELFAQISKQTRNNPDRAWLIRAWELMYLCASSMPPSKDIGAYLSEYVHYIAHGATTDSDVRVLALNTLNALKRSVKAGPRVTIPAREEIEALLSSRKLTTIVFFLDETFEEITYDMATTVADAVEELAGIIKLSVYSSFSLFECRKVVNGSKSSDVGNEEYIGLDDNKYIGDLLSEFKAAKDRNKGEILHCKLVFKKRLFRESDEAITDPMFVQLSYVQLQHDYILGNYPVGRDDAAQLSALQILVEIGFVDNPESCVEWISLLERFLPRQVAITRAKRDWELDIVSRYQLMEHLSKDDARQQFLRILRTLPYGNSVFFSVRKIDDPIGLLPGRIILGINKRGVHFFRPVPKEYLHSAELRDIMQFGSSNTAVFFKMRVAGVLHIFQFETKQGEEICVALQTHINDVMLRRYSKARSATSAVSQNDVSQTYKPPNIEIYEKRVQELSKAVEESERKADLLNEELQKKTKQERDMQKELEGLRDTLQSERQSIKEVTNDLDKLKSLCDEKDSSLQASLMEKTRLETRLKSGQGQESSNRTGVSGNHFERDTLPTVGTVNNSIEMLAKLEEELKSCKKELDASKELSKKLTMENNLLDQKVQRLERAKSEEKSNMERVYEDECCKLKSRIAELEQKLESRTRSLNVTESTLALRNAEVDTLQNSLKELDELREFKADVDRKNQQTAEILKRQGAQLIELENLYKQEQVLRKRYYNTIEDMKGKIRVFCRLRPLNDKELIEKDKNIVCSPDEFTVAHPWKDDKSKQHIYDRVFDANTTQEEVFEDTKYLVQSAVDGYNVCIFAYGQTGSGKTFTIYGSENNPGLTPRATSELFRVIKRDGHKYSFSLKAYMVELYQDNLVDLLLAKNATHQKLEIKKDSKGVVTVENVTVVNISSFEELRAIILRGSERRHTAGTNMNVESSRSHLILSIIIESTNLQTQSYARGKLSFVDLAGSERVKKSGSAGKQLKEAQSINKSLSALADVIGALSSDGQHIPYRNHKLTMLMSDSLGGNAKTLMFVNVSPAESNLEETYNSLMYASRVRCIVNDTSKHVAPKEIMRLKKLIAYWKEQAGKRSEDDDLEEIQEERTPKEKADNRLTS.

In terms of domain architecture, MyTH4 spans 88 to 244 (FQKDPIPTSL…PAREEIEALL (157 aa)). Positions 249–563 (LTTIVFFLDE…HINDVMLRRY (315 aa)) constitute an FERM domain. The stretch at 586-659 (NIEIYEKRVQ…LDKLKSLCDE (74 aa)) forms a coiled coil. The segment at 675 to 704 (ETRLKSGQGQESSNRTGVSGNHFERDTLPT) is disordered. Over residues 679-693 (KSGQGQESSNRTGVS) the composition is skewed to polar residues. The stretch at 708–799 (VNNSIEMLAK…TRSLNVTEST (92 aa)) forms a coiled coil. The 322-residue stretch at 872–1193 (KIRVFCRLRP…LMYASRVRCI (322 aa)) folds into the Kinesin motor domain. ATP is bound at residue 953-960 (GQTGSGKT). Residues 1201–1223 (VAPKEIMRLKKLIAYWKEQAGKR) form a calmodulin-binding region. Positions 1220–1248 (AGKRSEDDDLEEIQEERTPKEKADNRLTS) are disordered. Residues 1234-1248 (EERTPKEKADNRLTS) are compositionally biased toward basic and acidic residues.

The protein belongs to the TRAFAC class myosin-kinesin ATPase superfamily. Kinesin family. KIN-14 subfamily. Binds microtubules via its N-terminus containing the MyTH4 domain and binds F-actin via its FERM domain. Binding to calmodulin inhibits microtubule binding activity.

It localises to the cytoplasm. Its subcellular location is the cytoskeleton. Functionally, minus-end microtubule-dependent motor protein involved in the regulation of cell division. This Oryza sativa subsp. japonica (Rice) protein is Kinesin-like protein KIN-14I.